The following is a 299-amino-acid chain: tRNA dimethylallyltransferase (299 aa).

Residue 5 to 12 coordinates ATP; sequence GPTASGKT. Residue 7-12 coordinates substrate; it reads TASGKT. 3 interaction with substrate tRNA regions span residues 30–33, 154–158, and 235–240; these read DSAL, QRLSR, and RCVGYR.

The protein belongs to the IPP transferase family. In terms of assembly, monomer. Requires Mg(2+) as cofactor.

The enzyme catalyses adenosine(37) in tRNA + dimethylallyl diphosphate = N(6)-dimethylallyladenosine(37) in tRNA + diphosphate. In terms of biological role, catalyzes the transfer of a dimethylallyl group onto the adenine at position 37 in tRNAs that read codons beginning with uridine, leading to the formation of N6-(dimethylallyl)adenosine (i(6)A). The polypeptide is tRNA dimethylallyltransferase (Shewanella denitrificans (strain OS217 / ATCC BAA-1090 / DSM 15013)).